We begin with the raw amino-acid sequence, 115 residues long: Large ribosomal subunit protein bL19 (115 aa).

Belongs to the bacterial ribosomal protein bL19 family.

Functionally, this protein is located at the 30S-50S ribosomal subunit interface and may play a role in the structure and function of the aminoacyl-tRNA binding site. The sequence is that of Large ribosomal subunit protein bL19 from Bacillus velezensis (strain DSM 23117 / BGSC 10A6 / LMG 26770 / FZB42) (Bacillus amyloliquefaciens subsp. plantarum).